Here is a 469-residue protein sequence, read N- to C-terminus: Autophagy-related protein 18 (469 aa).

WD repeat units follow at residues 188-228 (AHRS…KLYQ) and 233-272 (TYPSTIYSMSFNLSSTLLCVSSTSDTVHIFRLGGPNNGAS). The L/FRRG motif motif lies at 229 to 233 (FRRGT). The disordered stretch occupies residues 285 to 348 (AASPGQDITG…RQSGSFSNIL (64 aa)). Positions 297 to 306 (RADRWSRSRS) are enriched in basic and acidic residues. Polar residues-rich tracts occupy residues 307 to 319 (YDSGNESPGSGSE) and 337 to 348 (NRRQSGSFSNIL).

It belongs to the WD repeat PROPPIN family. As to quaternary structure, component of the PI(3,5)P2 regulatory complex.

It localises to the preautophagosomal structure membrane. It is found in the vacuole membrane. Its subcellular location is the endosome membrane. Functionally, the PI(3,5)P2 regulatory complex regulates both the synthesis and turnover of phosphatidylinositol 3,5-bisphosphate (PtdIns(3,5)P2). Necessary for proper vacuole morphology. Plays an important role in osmotically-induced vacuole fragmentation. Required for cytoplasm to vacuole transport (Cvt) vesicle formation, pexophagy and starvation-induced autophagy. Involved in correct ATG9 trafficking to the pre-autophagosomal structure. Might also be involved in premeiotic DNA replication. This Pyricularia oryzae (strain 70-15 / ATCC MYA-4617 / FGSC 8958) (Rice blast fungus) protein is Autophagy-related protein 18 (ATG18).